Consider the following 353-residue polypeptide: Phosphate acyltransferase (353 aa).

Belongs to the PlsX family. In terms of assembly, homodimer. Probably interacts with PlsY.

It is found in the cytoplasm. It catalyses the reaction a fatty acyl-[ACP] + phosphate = an acyl phosphate + holo-[ACP]. The protein operates within lipid metabolism; phospholipid metabolism. Functionally, catalyzes the reversible formation of acyl-phosphate (acyl-PO(4)) from acyl-[acyl-carrier-protein] (acyl-ACP). This enzyme utilizes acyl-ACP as fatty acyl donor, but not acyl-CoA. In Ralstonia pickettii (strain 12J), this protein is Phosphate acyltransferase.